The chain runs to 134 residues: ATP synthase epsilon chain (134 aa).

Belongs to the ATPase epsilon chain family. As to quaternary structure, F-type ATPases have 2 components, CF(1) - the catalytic core - and CF(0) - the membrane proton channel. CF(1) has five subunits: alpha(3), beta(3), gamma(1), delta(1), epsilon(1). CF(0) has three main subunits: a, b and c.

It localises to the cellular thylakoid membrane. Functionally, produces ATP from ADP in the presence of a proton gradient across the membrane. This chain is ATP synthase epsilon chain, found in Prochlorococcus marinus (strain MIT 9515).